We begin with the raw amino-acid sequence, 688 residues long: Polyribonucleotide nucleotidyltransferase (688 aa).

2 residues coordinate Mg(2+): Asp-484 and Asp-490. The region spanning Pro-550–Ile-609 is the KH domain. Positions Asp-626–Ala-688 constitute an S1 motif domain.

The protein belongs to the polyribonucleotide nucleotidyltransferase family. Mg(2+) is required as a cofactor.

It localises to the cytoplasm. The catalysed reaction is RNA(n+1) + phosphate = RNA(n) + a ribonucleoside 5'-diphosphate. Functionally, involved in mRNA degradation. Catalyzes the phosphorolysis of single-stranded polyribonucleotides processively in the 3'- to 5'-direction. This is Polyribonucleotide nucleotidyltransferase from Helicobacter pylori (strain P12).